A 192-amino-acid polypeptide reads, in one-letter code: Peptidyl-tRNA hydrolase (192 aa).

The Proton acceptor role is filled by His-19. Tyr-64, Asn-66, and Asn-112 together coordinate tRNA.

This sequence belongs to the PTH family. Monomer.

Its subcellular location is the cytoplasm. The enzyme catalyses an N-acyl-L-alpha-aminoacyl-tRNA + H2O = an N-acyl-L-amino acid + a tRNA + H(+). Hydrolyzes ribosome-free peptidyl-tRNAs (with 1 or more amino acids incorporated), which drop off the ribosome during protein synthesis, or as a result of ribosome stalling. Its function is as follows. Catalyzes the release of premature peptidyl moieties from peptidyl-tRNA molecules trapped in stalled 50S ribosomal subunits, and thus maintains levels of free tRNAs and 50S ribosomes. This is Peptidyl-tRNA hydrolase from Acidiphilium cryptum (strain JF-5).